The primary structure comprises 454 residues: Bifunctional protein GlmU (454 aa).

The segment at 1-232 is pyrophosphorylase; the sequence is MTDRTCLSIV…VDNVIGINNR (232 aa). Residues 11 to 14, Lys25, Gln78, and 83 to 84 contribute to the UDP-N-acetyl-alpha-D-glucosamine site; these read LAAG and GT. Position 108 (Asp108) interacts with Mg(2+). The UDP-N-acetyl-alpha-D-glucosamine site is built by Gly144, Glu158, Asn173, and Asn230. Asn230 lines the Mg(2+) pocket. The interval 233 to 253 is linker; it reads AELAEAETIWQNRKRRELMLS. Residues 254–454 are N-acetyltransferase; sequence GVTLIAPETV…AIKAAKSVSK (201 aa). The UDP-N-acetyl-alpha-D-glucosamine site is built by Arg319 and Lys337. The Proton acceptor role is filled by His349. Positions 352 and 363 each coordinate UDP-N-acetyl-alpha-D-glucosamine. Acetyl-CoA-binding positions include Ala366, 372 to 373, Ser391, Ser409, and Arg426; that span reads NY.

This sequence in the N-terminal section; belongs to the N-acetylglucosamine-1-phosphate uridyltransferase family. The protein in the C-terminal section; belongs to the transferase hexapeptide repeat family. As to quaternary structure, homotrimer. Requires Mg(2+) as cofactor.

The protein localises to the cytoplasm. The enzyme catalyses alpha-D-glucosamine 1-phosphate + acetyl-CoA = N-acetyl-alpha-D-glucosamine 1-phosphate + CoA + H(+). It carries out the reaction N-acetyl-alpha-D-glucosamine 1-phosphate + UTP + H(+) = UDP-N-acetyl-alpha-D-glucosamine + diphosphate. It participates in nucleotide-sugar biosynthesis; UDP-N-acetyl-alpha-D-glucosamine biosynthesis; N-acetyl-alpha-D-glucosamine 1-phosphate from alpha-D-glucosamine 6-phosphate (route II): step 2/2. The protein operates within nucleotide-sugar biosynthesis; UDP-N-acetyl-alpha-D-glucosamine biosynthesis; UDP-N-acetyl-alpha-D-glucosamine from N-acetyl-alpha-D-glucosamine 1-phosphate: step 1/1. Its pathway is bacterial outer membrane biogenesis; LPS lipid A biosynthesis. Functionally, catalyzes the last two sequential reactions in the de novo biosynthetic pathway for UDP-N-acetylglucosamine (UDP-GlcNAc). The C-terminal domain catalyzes the transfer of acetyl group from acetyl coenzyme A to glucosamine-1-phosphate (GlcN-1-P) to produce N-acetylglucosamine-1-phosphate (GlcNAc-1-P), which is converted into UDP-GlcNAc by the transfer of uridine 5-monophosphate (from uridine 5-triphosphate), a reaction catalyzed by the N-terminal domain. This chain is Bifunctional protein GlmU, found in Brucella abortus (strain S19).